A 123-amino-acid chain; its full sequence is Mediator of RNA polymerase II transcription subunit 9 (123 aa).

A coiled-coil region spans residues 95–123; that stretch reads WQLHIQEKKIELEKKTKHLQRLRESIQKQ.

The protein belongs to the Mediator complex subunit 9 family. In terms of assembly, component of the Mediator complex.

The protein localises to the nucleus. Its function is as follows. Component of the Mediator complex, a coactivator involved in the regulated transcription of nearly all RNA polymerase II-dependent genes. Mediator functions as a bridge to convey information from gene-specific regulatory proteins to the basal RNA polymerase II transcription machinery. Mediator is recruited to promoters by direct interactions with regulatory proteins and serves as a scaffold for the assembly of a functional preinitiation complex with RNA polymerase II and the general transcription factors. The sequence is that of Mediator of RNA polymerase II transcription subunit 9 (CSE2) from Kluyveromyces lactis (strain ATCC 8585 / CBS 2359 / DSM 70799 / NBRC 1267 / NRRL Y-1140 / WM37) (Yeast).